The primary structure comprises 587 residues: Hatching enzyme (587 aa).

Residues 1–18 form the signal peptide; it reads MANSGLILLVMFMIHVTT. A propeptide spans 19–166 (activation peptide); that stretch reads VHNVPLPSTA…PRCGVPDVLP (148 aa). Residues asparagine 64, asparagine 126, and asparagine 141 are each glycosylated (N-linked (GlcNAc...) asparagine). A Cysteine switch motif is present at residues 157-164; the sequence is PRCGVPDV. 2 residues coordinate Zn(2+): cysteine 159 and histidine 283. Residue glutamate 284 is part of the active site. Residues histidine 287 and histidine 293 each coordinate Zn(2+). The tract at residues 325–382 is disordered; it reads LYGSNSGSGTTTTTRRPTTTRATTTRRTTTTRATTTRATTTTTTSPSRPSPPRRACSG. Residues 334–371 are compositionally biased toward low complexity; the sequence is TTTTTRRPTTTRATTTRRTTTTRATTTRATTTTTTSPS. Cysteine 380 and cysteine 582 are disulfide-bonded. Hemopexin repeat units lie at residues 381 to 422, 425 to 468, 469 to 513, and 518 to 570; these read SGSF…RFGF, PQNI…WVGL, PCNI…FNDV, and HDGV…IPQC. Asparagine 584 carries N-linked (GlcNAc...) asparagine glycosylation.

This sequence belongs to the peptidase M10A family. Requires Zn(2+) as cofactor.

The catalysed reaction is Hydrolysis of proteins of the fertilization envelope and dimethylcasein.. Its function is as follows. Allows the sea urchin to digest the protective envelope derived from the egg extracellular matrix; thus allowing the sea urchin to swim freely. The sequence is that of Hatching enzyme from Paracentrotus lividus (Common sea urchin).